Here is a 224-residue protein sequence, read N- to C-terminus: UPF0758 protein Pmen_4376 (224 aa).

The 123-residue stretch at 102–224 (ALESPQAVRD…PLSMAELGWM (123 aa)) folds into the MPN domain. Zn(2+) contacts are provided by histidine 173, histidine 175, and aspartate 186. The short motif at 173–186 (HNHPSGVCEPSQAD) is the JAMM motif element.

The protein belongs to the UPF0758 family.

The chain is UPF0758 protein Pmen_4376 from Ectopseudomonas mendocina (strain ymp) (Pseudomonas mendocina).